The sequence spans 388 residues: MGILGLSKLIADLAPQAIRESEIKNFFGRKVAIDASMCLYQFLIAVRSEGAQLATVNGDPTSHLMGMFYRTIRLLDNGIKPVYVFDGKPPDLKSGELAKRAERREEAEKALKAATEAGDDAEIEKFNRRLVRVTKEHAREAKELLKLMGVPYVEAPCEAEAQCAALVKAGKVYATATEDMDALTFGSTKLLRYLTYSEARKMPVKEFSYEKLLDGLGVNNREFIDLCILLGCDYCESIKGIGPKRAIELINNYRDIETILDNLDTSKYTVPENWNYKIARELFIEPEVANADAIELKWTEPDEEGLVKFLCGDRQFNEDRVRSGAKKLLKSKQSQTQVRLDSFFKTLPSTPSATNAAKRKAEEAKKSANNKKAKTSGGGGGGRGRRPK.

The tract at residues 1 to 104 is N-domain; sequence MGILGLSKLI…GELAKRAERR (104 aa). Position 34 (aspartate 34) interacts with Mg(2+). Positions 47 and 70 each coordinate DNA. 5 residues coordinate Mg(2+): aspartate 86, glutamate 158, glutamate 160, aspartate 179, and aspartate 181. Positions 122-253 are I-domain; that stretch reads EIEKFNRRLV…KRAIELINNY (132 aa). Position 158 (glutamate 158) interacts with DNA. Glycine 231 and aspartate 233 together coordinate DNA. Residue aspartate 233 participates in Mg(2+) binding. An interaction with PCNA region spans residues 336–344; sequence TQVRLDSFF. Residues 343 to 388 are disordered; it reads FFKTLPSTPSATNAAKRKAEEAKKSANNKKAKTSGGGGGGRGRRPK.

The protein belongs to the XPG/RAD2 endonuclease family. FEN1 subfamily. As to quaternary structure, interacts with PCNA. Three molecules of FEN1 bind to one PCNA trimer with each molecule binding to one PCNA monomer. PCNA stimulates the nuclease activity without altering cleavage specificity. Mg(2+) serves as cofactor. In terms of processing, phosphorylated. Phosphorylation upon DNA damage induces relocalization to the nuclear plasma.

The protein localises to the nucleus. Its subcellular location is the nucleolus. It is found in the nucleoplasm. It localises to the mitochondrion. Its function is as follows. Structure-specific nuclease with 5'-flap endonuclease and 5'-3' exonuclease activities involved in DNA replication and repair. During DNA replication, cleaves the 5'-overhanging flap structure that is generated by displacement synthesis when DNA polymerase encounters the 5'-end of a downstream Okazaki fragment. It enters the flap from the 5'-end and then tracks to cleave the flap base, leaving a nick for ligation. Also involved in the long patch base excision repair (LP-BER) pathway, by cleaving within the apurinic/apyrimidinic (AP) site-terminated flap. Acts as a genome stabilization factor that prevents flaps from equilibrating into structures that lead to duplications and deletions. Also possesses 5'-3' exonuclease activity on nicked or gapped double-stranded DNA, and exhibits RNase H activity. Also involved in replication and repair of rDNA and in repairing mitochondrial DNA. The polypeptide is Flap endonuclease 1 (Drosophila ananassae (Fruit fly)).